Reading from the N-terminus, the 252-residue chain is Imidazole glycerol phosphate synthase subunit HisF (252 aa).

Catalysis depends on residues D11 and D130.

It belongs to the HisA/HisF family. As to quaternary structure, heterodimer of HisH and HisF.

The protein localises to the cytoplasm. It catalyses the reaction 5-[(5-phospho-1-deoxy-D-ribulos-1-ylimino)methylamino]-1-(5-phospho-beta-D-ribosyl)imidazole-4-carboxamide + L-glutamine = D-erythro-1-(imidazol-4-yl)glycerol 3-phosphate + 5-amino-1-(5-phospho-beta-D-ribosyl)imidazole-4-carboxamide + L-glutamate + H(+). It functions in the pathway amino-acid biosynthesis; L-histidine biosynthesis; L-histidine from 5-phospho-alpha-D-ribose 1-diphosphate: step 5/9. In terms of biological role, IGPS catalyzes the conversion of PRFAR and glutamine to IGP, AICAR and glutamate. The HisF subunit catalyzes the cyclization activity that produces IGP and AICAR from PRFAR using the ammonia provided by the HisH subunit. This is Imidazole glycerol phosphate synthase subunit HisF from Hyphomonas neptunium (strain ATCC 15444).